Reading from the N-terminus, the 593-residue chain is Thiol:disulfide interchange protein DsbD (593 aa).

A signal peptide spans 1–21; it reads MRALLTFFVAGLLVLSSPAMA. Disulfide bonds link cysteine 130–cysteine 136 and cysteine 207–cysteine 328. 8 consecutive transmembrane segments (helical) span residues 193–215, 235–257, 269–291, 318–340, 347–369, 384–401, 408–425, and 440–462; these read LLFL…YPIL, LVYV…SAGL, LIGL…TLQL, GAIS…LLYV, LTGG…LVAV, RVKT…IFLL, MWST…FGWL, and SAVG…NYWF. Residues 451-593 form the Thioredoxin domain; it reads FASAQPALNY…FLEHIQRISN (143 aa). Cysteine 508 and cysteine 511 form a disulfide bridge.

It belongs to the thioredoxin family. DsbD subfamily.

It is found in the cell inner membrane. The enzyme catalyses [protein]-dithiol + NAD(+) = [protein]-disulfide + NADH + H(+). It catalyses the reaction [protein]-dithiol + NADP(+) = [protein]-disulfide + NADPH + H(+). Required to facilitate the formation of correct disulfide bonds in some periplasmic proteins and for the assembly of the periplasmic c-type cytochromes. Acts by transferring electrons from cytoplasmic thioredoxin to the periplasm. This transfer involves a cascade of disulfide bond formation and reduction steps. The protein is Thiol:disulfide interchange protein DsbD of Vibrio vulnificus (strain CMCP6).